The sequence spans 597 residues: Elongation factor 4 (597 aa).

In terms of domain architecture, tr-type G spans 2–184 (KHIRNFSIIA…TIVKCIPAPE (183 aa)). GTP-binding positions include 14–19 (DHGKST) and 131–134 (NKID).

This sequence belongs to the TRAFAC class translation factor GTPase superfamily. Classic translation factor GTPase family. LepA subfamily.

The protein localises to the cell inner membrane. It carries out the reaction GTP + H2O = GDP + phosphate + H(+). Required for accurate and efficient protein synthesis under certain stress conditions. May act as a fidelity factor of the translation reaction, by catalyzing a one-codon backward translocation of tRNAs on improperly translocated ribosomes. Back-translocation proceeds from a post-translocation (POST) complex to a pre-translocation (PRE) complex, thus giving elongation factor G a second chance to translocate the tRNAs correctly. Binds to ribosomes in a GTP-dependent manner. In Aliivibrio salmonicida (strain LFI1238) (Vibrio salmonicida (strain LFI1238)), this protein is Elongation factor 4.